The primary structure comprises 287 residues: 4-hydroxybenzoate octaprenyltransferase (287 aa).

A run of 6 helical transmembrane segments spans residues 41-61, 89-109, 133-153, 158-178, 202-224, and 266-286; these read WPLL…GCAM, WEAV…ILPL, FFAI…PMAF, DTVP…SVAY, FGRF…YVWI, and HNNW…LLAG.

It belongs to the UbiA prenyltransferase family. Mg(2+) serves as cofactor.

The protein localises to the cell inner membrane. The enzyme catalyses all-trans-octaprenyl diphosphate + 4-hydroxybenzoate = 4-hydroxy-3-(all-trans-octaprenyl)benzoate + diphosphate. It participates in cofactor biosynthesis; ubiquinone biosynthesis. Catalyzes the prenylation of para-hydroxybenzoate (PHB) with an all-trans polyprenyl group. Mediates the second step in the final reaction sequence of ubiquinone-8 (UQ-8) biosynthesis, which is the condensation of the polyisoprenoid side chain with PHB, generating the first membrane-bound Q intermediate 3-octaprenyl-4-hydroxybenzoate. This Burkholderia cenocepacia (strain HI2424) protein is 4-hydroxybenzoate octaprenyltransferase.